Reading from the N-terminus, the 479-residue chain is Probable periplasmic serine endoprotease DegP-like (479 aa).

An N-terminal signal peptide occupies residues 1-27; that stretch reads MSIPRMKSYFSLIAAVLMLGQVATAQA. The segment at 77–99 is disordered; sequence LERSMPPGSRPPGAGKGDRQRET. Catalysis depends on charge relay system residues histidine 119, aspartate 149, and serine 222. Residues 220-222 and 277-281 each bind substrate; these read GNS and LGVVI. 2 consecutive PDZ domains span residues 266 to 357 and 363 to 468; these read LKAS…IRDG and TVTV…LRQG.

This sequence belongs to the peptidase S1C family.

It localises to the periplasm. It carries out the reaction Acts on substrates that are at least partially unfolded. The cleavage site P1 residue is normally between a pair of hydrophobic residues, such as Val-|-Val.. Functionally, might be efficient in the degradation of transiently denatured and unfolded proteins which accumulate in the periplasm following stress conditions. The chain is Probable periplasmic serine endoprotease DegP-like (mucD) from Pseudomonas savastanoi pv. phaseolicola (strain 1448A / Race 6) (Pseudomonas syringae pv. phaseolicola (strain 1448A / Race 6)).